We begin with the raw amino-acid sequence, 506 residues long: uncharacterized protein (506 aa).

It to R.prowazekii RP789, RP027 and RP028.

This is an uncharacterized protein from Synechocystis sp. (strain ATCC 27184 / PCC 6803 / Kazusa).